The following is a 200-amino-acid chain: Large ribosomal subunit protein uL4 (200 aa).

Positions 38–72 (GRQGTKQQKTRSDVAGGGKRPWRQKGTGRARAGTT) are disordered.

Belongs to the universal ribosomal protein uL4 family. In terms of assembly, part of the 50S ribosomal subunit.

Its function is as follows. One of the primary rRNA binding proteins, this protein initially binds near the 5'-end of the 23S rRNA. It is important during the early stages of 50S assembly. It makes multiple contacts with different domains of the 23S rRNA in the assembled 50S subunit and ribosome. In terms of biological role, forms part of the polypeptide exit tunnel. This is Large ribosomal subunit protein uL4 from Pseudomonas putida (strain ATCC 700007 / DSM 6899 / JCM 31910 / BCRC 17059 / LMG 24140 / F1).